A 540-amino-acid chain; its full sequence is Phenylalanine--tRNA ligase beta subunit (540 aa).

In terms of domain architecture, B5 spans 268-343 (LQHKSIKITA…ITYGYNNLSP (76 aa)). Mg(2+)-binding residues include D321, D327, E330, and E331.

It belongs to the phenylalanyl-tRNA synthetase beta subunit family. Type 2 subfamily. Tetramer of two alpha and two beta subunits. Requires Mg(2+) as cofactor.

The protein resides in the cytoplasm. The enzyme catalyses tRNA(Phe) + L-phenylalanine + ATP = L-phenylalanyl-tRNA(Phe) + AMP + diphosphate + H(+). In Sulfurisphaera tokodaii (strain DSM 16993 / JCM 10545 / NBRC 100140 / 7) (Sulfolobus tokodaii), this protein is Phenylalanine--tRNA ligase beta subunit.